A 307-amino-acid chain; its full sequence is Ribosomal RNA small subunit methyltransferase H (307 aa).

S-adenosyl-L-methionine contacts are provided by residues 32 to 34 (GGH), Asp52, Phe78, Asp99, and Gln106.

It belongs to the methyltransferase superfamily. RsmH family.

The protein localises to the cytoplasm. The enzyme catalyses cytidine(1402) in 16S rRNA + S-adenosyl-L-methionine = N(4)-methylcytidine(1402) in 16S rRNA + S-adenosyl-L-homocysteine + H(+). Its function is as follows. Specifically methylates the N4 position of cytidine in position 1402 (C1402) of 16S rRNA. The sequence is that of Ribosomal RNA small subunit methyltransferase H from Acinetobacter baumannii (strain SDF).